We begin with the raw amino-acid sequence, 315 residues long: Acetyl-coenzyme A carboxylase carboxyl transferase subunit alpha (315 aa).

A CoA carboxyltransferase C-terminal domain is found at 40–293 (LEDKKIALTK…KKNVLAALDR (254 aa)).

Belongs to the AccA family. In terms of assembly, acetyl-CoA carboxylase is a heterohexamer composed of biotin carboxyl carrier protein (AccB), biotin carboxylase (AccC) and two subunits each of ACCase subunit alpha (AccA) and ACCase subunit beta (AccD).

It is found in the cytoplasm. It carries out the reaction N(6)-carboxybiotinyl-L-lysyl-[protein] + acetyl-CoA = N(6)-biotinyl-L-lysyl-[protein] + malonyl-CoA. It participates in lipid metabolism; malonyl-CoA biosynthesis; malonyl-CoA from acetyl-CoA: step 1/1. Component of the acetyl coenzyme A carboxylase (ACC) complex. First, biotin carboxylase catalyzes the carboxylation of biotin on its carrier protein (BCCP) and then the CO(2) group is transferred by the carboxyltransferase to acetyl-CoA to form malonyl-CoA. The polypeptide is Acetyl-coenzyme A carboxylase carboxyl transferase subunit alpha (Marinomonas sp. (strain MWYL1)).